The following is a 301-amino-acid chain: Hydroxymycolate synthase MmaA4 (301 aa).

Residues 42–43 (YS), 81–83 (GCG), 103–108 (TLSKNQ), 132–133 (WE), and Ile-145 contribute to the S-adenosyl-L-methionine site. Cys-278 is a catalytic residue.

Belongs to the CFA/CMAS family. Monomer.

Its pathway is lipid metabolism; mycolic acid biosynthesis. Involved in the biosynthesis of hydroxymycolate, a common precursor of oxygenated mycolic acids (methoxymycolate and ketomycolate). Probably transfers a methyl group from the S-adenosylmethionine (SAM) cofactor and, subsequently or simultaneously, a water molecule onto the double bound of ethylene substrates, leading to the formation of the hydroxylated product at the distal position. The protein is Hydroxymycolate synthase MmaA4 (cmaA) of Mycobacterium bovis (strain ATCC BAA-935 / AF2122/97).